A 135-amino-acid chain; its full sequence is Ribosome-binding factor A (135 aa).

Residues 115-135 (VNEDKRKQQDSGREEDQAGEE) form a disordered region. Basic and acidic residues predominate over residues 116–135 (NEDKRKQQDSGREEDQAGEE).

The protein belongs to the RbfA family. In terms of assembly, monomer. Binds 30S ribosomal subunits, but not 50S ribosomal subunits or 70S ribosomes.

Its subcellular location is the cytoplasm. In terms of biological role, one of several proteins that assist in the late maturation steps of the functional core of the 30S ribosomal subunit. Associates with free 30S ribosomal subunits (but not with 30S subunits that are part of 70S ribosomes or polysomes). Required for efficient processing of 16S rRNA. May interact with the 5'-terminal helix region of 16S rRNA. The polypeptide is Ribosome-binding factor A (Vibrio campbellii (strain ATCC BAA-1116)).